Consider the following 239-residue polypeptide: Chaperone protein PapD (239 aa).

The first 21 residues, 1–21 (MIRKKILMAAIPLFVISGADA), serve as a signal peptide directing secretion. Cysteines 228 and 233 form a disulfide.

The protein belongs to the periplasmic pilus chaperone family. As to quaternary structure, interacts with substrates PapG and PapK.

The protein localises to the periplasm. Functionally, binds and caps interactive surfaces on P pilus subunits to prevent them from participating in non-productive interactions. Facilitates the import of P pilus subunits into the periplasm, probably also facilitates their folding. Chaperone-subunit complexes are then targeted to the PapC outer membrane usher where the chaperone must uncap from the subunits. Coexpression of this chaperone with individual, otherwise toxic, P pilus subunits (tested with PapA, PapE and PapG) suppresses their growth inhibitory phenotype. The chain is Chaperone protein PapD (papD) from Escherichia coli.